A 486-amino-acid polypeptide reads, in one-letter code: UDP-N-acetylmuramate--L-alanine ligase (486 aa).

Residue 129–135 (GTHGKTT) participates in ATP binding.

The protein belongs to the MurCDEF family.

The protein resides in the cytoplasm. It catalyses the reaction UDP-N-acetyl-alpha-D-muramate + L-alanine + ATP = UDP-N-acetyl-alpha-D-muramoyl-L-alanine + ADP + phosphate + H(+). It functions in the pathway cell wall biogenesis; peptidoglycan biosynthesis. Cell wall formation. The protein is UDP-N-acetylmuramate--L-alanine ligase of Vibrio cholerae serotype O1 (strain ATCC 39315 / El Tor Inaba N16961).